We begin with the raw amino-acid sequence, 371 residues long: MYNESPIIRRKSSRIYVGNVPIGDGAPIAVQSMTNTRTTDVEATVAQIKALEKVGADIVRVSVPTMDAAEAFKFIKQQTNIPLIADIHFDYRIALKVAEYGVDCLRINPGNIGNEERIRSVVECARDKNIPIRIGVNGGSLEKDLMDKYKEPTPEALLESAMRHVDILDRLNFDQFKVSVKASDVFLAVESYRLLAKQIIQPLHLGITEAGGARAGSVKSAVGLGMLLADGIGDTLRISLAADPVEEIKVGFDILKSLRIRSRGINFIACPSCSRQEFDVISTVNELEQRLEDIVTPMDVSIIGCVVNGPGEALVSDIGLTGGNRMSGYYDDGVRQKERFDNNNIVDSLEAKIRAKAAIVASRIPAQDLNK.

Residues Cys270, Cys273, Cys305, and Glu312 each coordinate [4Fe-4S] cluster.

The protein belongs to the IspG family. Requires [4Fe-4S] cluster as cofactor.

The enzyme catalyses (2E)-4-hydroxy-3-methylbut-2-enyl diphosphate + oxidized [flavodoxin] + H2O + 2 H(+) = 2-C-methyl-D-erythritol 2,4-cyclic diphosphate + reduced [flavodoxin]. Its pathway is isoprenoid biosynthesis; isopentenyl diphosphate biosynthesis via DXP pathway; isopentenyl diphosphate from 1-deoxy-D-xylulose 5-phosphate: step 5/6. Converts 2C-methyl-D-erythritol 2,4-cyclodiphosphate (ME-2,4cPP) into 1-hydroxy-2-methyl-2-(E)-butenyl 4-diphosphate. The protein is 4-hydroxy-3-methylbut-2-en-1-yl diphosphate synthase (flavodoxin) of Shewanella halifaxensis (strain HAW-EB4).